Reading from the N-terminus, the 420-residue chain is MSDDQFHHPPPPSSMRHRSTSDAADGGCGEIVEVQGGHIVRSTGRKDRHSKVCTAKGPRDRRVRLSAHTAIQFYDVQDRLGFDRPSKAVDWLIKKAKTSIDELAELPPWNPADAIRLAAANAKPRRTTAKTQISPSPPPPQQQQQQQQLQFGVGFNGGGAEHPSNNESSFLPPSMDSDSIADTIKSFFPVIGSSTEAPSNHNLMHNYHHQHPPDLLSRTNSQNQDLRLSLQSFPDGPPSLLHHQHHHHTSASASEPTLFYGQSNPLGFDTSSWEQQSSEFGRIQRLVAWNSGGGGGATDTGNGGGFLFAPPTPSTTSFQPVLGQSQQLYSQRGPLQSSYSPMIRAWFDPHHHHQSISTDDLNHHHHLPPPVHQSAIPGIGFASGEFSSGFRIPARFQGQEEEQHDGLTHKPSSASSISRH.

The segment at 1 to 27 (MSDDQFHHPPPPSSMRHRSTSDAADGG) is disordered. The TCP domain maps to 45–103 (RKDRHSKVCTAKGPRDRRVRLSAHTAIQFYDVQDRLGFDRPSKAVDWLIKKAKTSIDEL). Disordered regions lie at residues 121 to 176 (NAKP…PSMD), 228 to 256 (LSLQ…ASEP), 353 to 379 (HQSI…IPGI), and 399 to 420 (QEEE…ISRH). Residues 410 to 420 (KPSSASSISRH) show a composition bias toward polar residues.

Interacts with AHL27 and AHL29. Interacts with SPL. Interacts with JGB. Interacts with GI (via N-terminus). Expressed in cotyledons, particularly in the vascular region, in leaves, roots, buds, flowers and immature siliques.

The protein localises to the nucleus. Its function is as follows. Transcription factor playing a pivotal role in the control of morphogenesis of shoot organs by negatively regulating the expression of boundary-specific genes such as CUC genes, probably through the induction of miRNA (e.g. miR164). Required during early steps of embryogenesis. Participates in ovule development. Activates LOX2 expression by binding to the 5'-GGACCA-3' motif found in its promoter. Activates YUC5 transcription by binding to the 5'-GTGGGCCA-3' motif found in its promoter. Through the activation of YUC5 transcription, integrates the auxin response to a brassinosteroid-dependent molecular circuit that promotes cell elongation in hypocotyls. Activates GIS transcription by binding to the 5'-TGGTCC-3' motif found in its promoter. Involved in the regulation of trichome branching through the activation of GIS transcription. Activates CO transcription by binding to the 5'-GGACCAC-3' motif found in its promoter. Involved in the regulation of photoperiodic flowering through the activation of CO transcription. Activates TCL1 and TCL2 transcription by binding to the 5'-TGGCCA-3' and 5'-GTGGACCA-3' motifS found in their respective promoters. Involved in the suppression of trichome initiaition through the activation of TCL1 and TCL2 transcription. Activates HAT2 transcription by binding to the 5'-TGGTCCAC-3' motif found in its promoter. Through the activation of HAT2 transcription, involved in the auxin-independent reprogramming of mitotic cells to exit division and acquire differentiation competence within the transition zone. In Arabidopsis thaliana (Mouse-ear cress), this protein is Transcription factor TCP4 (TCP4).